The primary structure comprises 615 residues: DNA mismatch repair protein MutL (615 aa).

A disordered region spans residues 369–397 (REPVAPRYTPAPASGSRPAAPWPNAQPGY). Positions 378–391 (PAPASGSRPAAPWP) are enriched in low complexity.

This sequence belongs to the DNA mismatch repair MutL/HexB family.

Functionally, this protein is involved in the repair of mismatches in DNA. It is required for dam-dependent methyl-directed DNA mismatch repair. May act as a 'molecular matchmaker', a protein that promotes the formation of a stable complex between two or more DNA-binding proteins in an ATP-dependent manner without itself being part of a final effector complex. The chain is DNA mismatch repair protein MutL from Escherichia coli (strain SMS-3-5 / SECEC).